We begin with the raw amino-acid sequence, 876 residues long: MAP7 domain-containing protein 3 (876 aa).

Disordered regions lie at residues 30–139, 162–200, and 402–438; these read AEER…KFKA, GGVM…VDNT, and TEAP…IDKR. Residues 39–54 are compositionally biased toward polar residues; the sequence is INSSAGANKRSSSTPD. A coiled-coil region spans residues 58–136; the sequence is LKNDVKQQLA…KQKQAEDTEK (79 aa). Composition is skewed to basic and acidic residues over residues 60–139 and 169–196; these read NDVK…KFKA and KSGK…DMQH. Phosphoserine is present on residues Ser-417 and Ser-483. Coiled-coil stretches lie at residues 549–578 and 626–658; these read IQIR…IARK and SAMM…RRKA. Disordered regions lie at residues 558-683 and 742-783; these read QSKN…EIFP and IQGK…NPNH. Composition is skewed to basic and acidic residues over residues 559–590 and 630–659; these read SKNE…DKVP and KSRD…RKAS. The span at 665 to 679 shows a compositional bias: acidic residues; it reads SEDEADDEGESEDSL. Over residues 750–763 the composition is skewed to basic residues; that stretch reads SAKKPPTRPIRSRK. Over residues 771–782 the composition is skewed to polar residues; the sequence is IRPTQSASSNPN.

This sequence belongs to the MAP7 family. As to expression, high expression in lung, skeletal muscle, brain, and kidney, with much weaker expression in spleen, small intestine, liver, and heart.

The protein localises to the cytoplasm. It is found in the cytoskeleton. The protein resides in the spindle. Functionally, promotes the assembly and stability of microtubules. The chain is MAP7 domain-containing protein 3 (Map7d3) from Mus musculus (Mouse).